Reading from the N-terminus, the 299-residue chain is Ig alpha chain C region (299 aa).

Ig-like domains are found at residues 71 to 167 and 174 to 276; these read PSLS…ATIS and PQVH…KTID.

Ig alpha is the major immunoglobulin class in body secretions. It may serve both to defend against local infection and to prevent access of foreign antigens to the general immunologic system. This chain is Ig alpha chain C region, found in Oryctolagus cuniculus (Rabbit).